The sequence spans 403 residues: MSKLSIKDLQLSNKRVFMRVDFNVPLDENGRVTDDTRIRETLPTIEYALRHGAKLILCSHLGRPKGKPNPKMSLKPVAERLRVMLDHAISPGQNVGFSPDCIGMQAQEMAKQLEKGQALLLENVRFHAEEEKNDPAFAKELASLCELYVNDAFGSAHRAHASTEGITHYVEKSAAGLLMQKELDYLGKATSNPAKPFVAILGGAKVSDKIGVIQNLMAKVDAIIIGGGMAYTFLKAQGQEIGKSLFEADKLDLAKQILADAHKRGLKFLLPVDHVTADKFDMHATPHQIGEGQSIPAEQMALDIGPKTVALFSEEIAKARTIVWNGPMGVFEFDNFAKGTRAIAKAVAGNSGATSIVGGGDSVAAVHDAGVADKITHISTGGGASLEFLEGKKLPGVEALTNK.

Substrate-binding positions include Asp21–Asn23, Arg37, His60–Arg63, Arg125, and Arg158. Residues Lys209, Glu332, and Gly359–Ser362 contribute to the ATP site.

It belongs to the phosphoglycerate kinase family. As to quaternary structure, monomer.

The protein localises to the cytoplasm. The enzyme catalyses (2R)-3-phosphoglycerate + ATP = (2R)-3-phospho-glyceroyl phosphate + ADP. It participates in carbohydrate degradation; glycolysis; pyruvate from D-glyceraldehyde 3-phosphate: step 2/5. In Koribacter versatilis (strain Ellin345), this protein is Phosphoglycerate kinase.